The following is a 197-amino-acid chain: Imidazoleglycerol-phosphate dehydratase (197 aa).

Belongs to the imidazoleglycerol-phosphate dehydratase family.

The protein localises to the cytoplasm. The catalysed reaction is D-erythro-1-(imidazol-4-yl)glycerol 3-phosphate = 3-(imidazol-4-yl)-2-oxopropyl phosphate + H2O. The protein operates within amino-acid biosynthesis; L-histidine biosynthesis; L-histidine from 5-phospho-alpha-D-ribose 1-diphosphate: step 6/9. This Rhodopseudomonas palustris (strain TIE-1) protein is Imidazoleglycerol-phosphate dehydratase.